We begin with the raw amino-acid sequence, 192 residues long: Imidazole glycerol phosphate synthase subunit HisH (192 aa).

The Glutamine amidotransferase type-1 domain occupies 1–192 (MIVIVDYGLG…QAIQGGFIND (192 aa)). Cys77 serves as the catalytic Nucleophile. Residues His169 and Glu171 contribute to the active site.

Heterodimer of HisH and HisF.

Its subcellular location is the cytoplasm. The enzyme catalyses 5-[(5-phospho-1-deoxy-D-ribulos-1-ylimino)methylamino]-1-(5-phospho-beta-D-ribosyl)imidazole-4-carboxamide + L-glutamine = D-erythro-1-(imidazol-4-yl)glycerol 3-phosphate + 5-amino-1-(5-phospho-beta-D-ribosyl)imidazole-4-carboxamide + L-glutamate + H(+). The catalysed reaction is L-glutamine + H2O = L-glutamate + NH4(+). The protein operates within amino-acid biosynthesis; L-histidine biosynthesis; L-histidine from 5-phospho-alpha-D-ribose 1-diphosphate: step 5/9. Its function is as follows. IGPS catalyzes the conversion of PRFAR and glutamine to IGP, AICAR and glutamate. The HisH subunit catalyzes the hydrolysis of glutamine to glutamate and ammonia as part of the synthesis of IGP and AICAR. The resulting ammonia molecule is channeled to the active site of HisF. The polypeptide is Imidazole glycerol phosphate synthase subunit HisH (Staphylococcus aureus (strain COL)).